Reading from the N-terminus, the 57-residue chain is Protein CgkB (57 aa).

The chain is Protein CgkB (cgkB) from Pseudoalteromonas carrageenovora (Alteromonas carrageenovora).